The chain runs to 337 residues: Ribosomal RNA small subunit methyltransferase H (337 aa).

Residues 36–38 (GGH), Asp56, Phe82, Asp100, and Gln107 each bind S-adenosyl-L-methionine. Positions 314 to 337 (GLERRSGRIPNPRSPIPASQGDAR) are disordered.

It belongs to the methyltransferase superfamily. RsmH family.

It localises to the cytoplasm. It catalyses the reaction cytidine(1402) in 16S rRNA + S-adenosyl-L-methionine = N(4)-methylcytidine(1402) in 16S rRNA + S-adenosyl-L-homocysteine + H(+). Specifically methylates the N4 position of cytidine in position 1402 (C1402) of 16S rRNA. The sequence is that of Ribosomal RNA small subunit methyltransferase H from Xanthomonas oryzae pv. oryzae (strain PXO99A).